The chain runs to 400 residues: NADH dehydrogenase-like protein Rv1812c (400 aa).

Belongs to the NADH dehydrogenase family. The cofactor is FAD.

The sequence is that of NADH dehydrogenase-like protein Rv1812c from Mycobacterium tuberculosis (strain ATCC 25618 / H37Rv).